The sequence spans 113 residues: Protein FMC1 homolog (113 aa).

Positions 94–113 (SAGLVGLQLPHQPGGKGWEP) are disordered.

Belongs to the FMC1 family. In terms of assembly, interacts with ATPAF2.

The protein localises to the mitochondrion. Its function is as follows. Plays a role in the assembly/stability of the mitochondrial membrane ATP synthase (F(1)F(0) ATP synthase or Complex V). The chain is Protein FMC1 homolog from Rattus norvegicus (Rat).